The sequence spans 345 residues: tRNA N6-adenosine threonylcarbamoyltransferase (345 aa).

The Fe cation site is built by His109 and His113. Residues 136–140, Asp169, Gly182, Asp186, and Asn284 contribute to the substrate site; that span reads TVSGG. Fe cation is bound at residue Asp312.

Belongs to the KAE1 / TsaD family. Requires Fe(2+) as cofactor.

Its subcellular location is the cytoplasm. It carries out the reaction L-threonylcarbamoyladenylate + adenosine(37) in tRNA = N(6)-L-threonylcarbamoyladenosine(37) in tRNA + AMP + H(+). Its function is as follows. Required for the formation of a threonylcarbamoyl group on adenosine at position 37 (t(6)A37) in tRNAs that read codons beginning with adenine. Is involved in the transfer of the threonylcarbamoyl moiety of threonylcarbamoyl-AMP (TC-AMP) to the N6 group of A37, together with TsaE and TsaB. TsaD likely plays a direct catalytic role in this reaction. In Prosthecochloris aestuarii (strain DSM 271 / SK 413), this protein is tRNA N6-adenosine threonylcarbamoyltransferase.